The primary structure comprises 262 residues: Glycoprotein gp2 (262 aa).

Residues 1–45 (RRGSPQGGSHTTPHPDRLTPSPDDTYDDDTNHPNGRNNSIEIVPQ) form a disordered region.

The protein localises to the virion membrane. Functionally, virulence factor. This chain is Glycoprotein gp2, found in Equus caballus (Horse).